Here is a 284-residue protein sequence, read N- to C-terminus: Bifunctional protein FolD (284 aa).

Residues 165–167 (GRG), Thr192, and Val233 each bind NADP(+).

Belongs to the tetrahydrofolate dehydrogenase/cyclohydrolase family. In terms of assembly, homodimer.

The catalysed reaction is (6R)-5,10-methylene-5,6,7,8-tetrahydrofolate + NADP(+) = (6R)-5,10-methenyltetrahydrofolate + NADPH. The enzyme catalyses (6R)-5,10-methenyltetrahydrofolate + H2O = (6R)-10-formyltetrahydrofolate + H(+). Its pathway is one-carbon metabolism; tetrahydrofolate interconversion. Its function is as follows. Catalyzes the oxidation of 5,10-methylenetetrahydrofolate to 5,10-methenyltetrahydrofolate and then the hydrolysis of 5,10-methenyltetrahydrofolate to 10-formyltetrahydrofolate. The sequence is that of Bifunctional protein FolD from Corynebacterium efficiens (strain DSM 44549 / YS-314 / AJ 12310 / JCM 11189 / NBRC 100395).